The sequence spans 204 residues: MEYDIKTLDNGSAGSVALPEEIFAVTPRSDIMARVVHWQLAKRRAGTHRTKGMGEISGTTKKPYRQKGTGSARQGSLRAPQFRTGGVVHGPVVRDHGYDLPKKVRRLGLICALSQKAAEGKLIVLDAANGVTKTREAAAKIKALGWTSALIVDGAVDEQFARAIANLPKIDVLPTIGANVYDILNHDVLVITRAGLEGLKERLA.

The segment at 44-76 (RAGTHRTKGMGEISGTTKKPYRQKGTGSARQGS) is disordered.

The protein belongs to the universal ribosomal protein uL4 family. Part of the 50S ribosomal subunit.

In terms of biological role, one of the primary rRNA binding proteins, this protein initially binds near the 5'-end of the 23S rRNA. It is important during the early stages of 50S assembly. It makes multiple contacts with different domains of the 23S rRNA in the assembled 50S subunit and ribosome. Forms part of the polypeptide exit tunnel. This Gluconobacter oxydans (strain 621H) (Gluconobacter suboxydans) protein is Large ribosomal subunit protein uL4.